Here is a 1693-residue protein sequence, read N- to C-terminus: Serine protease filzig (1693 aa).

Over 1–47 the chain is Cytoplasmic; it reads MFKWVTPASTATLSRCTLPATTAATTTTTAMAATRTATTTTRTTRPQ. The helical; Signal-anchor for type II membrane protein transmembrane segment at 48–68 threads the bilayer; the sequence is LLSIALTSLIIIVASFVPTTS. Residues 69–1693 lie on the Extracellular side of the membrane; the sequence is GFRSIETNGG…PWLRSITGVK (1625 aa). Disordered stretches follow at residues 170 to 198, 212 to 321, 352 to 465, and 477 to 524; these read QQSA…QQPS, QQLD…NDDF, GLQD…THPG, and STGY…TTVS. Polar residues-rich tracts occupy residues 178–198 and 212–222; these read FESY…QQPS and QQLDSSSSISP. 2 stretches are compositionally biased toward low complexity: residues 230 to 241 and 252 to 268; these read EPQQQEYQSESE and TSSS…SSAS. The segment covering 274-294 has biased composition (polar residues); the sequence is EPSQPADASNDQTTQKINKQP. Composition is skewed to low complexity over residues 358–404, 422–431, and 488–501; these read SSES…PTQK, QQKPQQVAKP, and EPPK…PAEQ. The segment covering 502-524 has biased composition (polar residues); that stretch reads SYISSSTSAKRPTTGHNSPTTVS. 2 N-linked (GlcNAc...) asparagine glycosylation sites follow: N541 and N582. Disordered regions lie at residues 615 to 635, 752 to 1007, and 1057 to 1090; these read QDAS…PGYG, HYNP…PPAT, and YAHR…TVLI. Over residues 771 to 799 the composition is skewed to polar residues; that stretch reads SVSSHTTKVQEQMDETSNGYQQSETTSGY. Over residues 836–847 the composition is skewed to basic residues; sequence PRPKPSTKRPAV. Composition is skewed to polar residues over residues 951-962 and 989-1000; these read QYDQPSAPSASY and KPISTSYVTGPS. Residues N1215 and N1272 are each glycosylated (N-linked (GlcNAc...) asparagine). Composition is skewed to low complexity over residues 1297–1307, 1331–1353, and 1362–1376; these read PVRTATTTRPK, TTTR…TTRR, and RVSS…SSAR. Positions 1297-1435 are disordered; the sequence is PVRTATTTRP…TPNLAFHSPS (139 aa). Over residues 1380 to 1391 the composition is skewed to acidic residues; the sequence is DEIVDEEDEEDV. One can recognise a Peptidase S1 domain in the interval 1449–1691; sequence IVGGKGSTFG…YKPWLRSITG (243 aa). Residues C1480 and C1496 are joined by a disulfide bond. Active-site charge relay system residues include H1495 and D1544. Intrachain disulfides connect C1608–C1627 and C1638–C1667. The Charge relay system role is filled by S1642.

This sequence belongs to the peptidase S1 family.

It is found in the cell membrane. Its function is as follows. Probable endopeptidase. In tracheal terminal cells, acts downstream of ich to regulate seamless tube growth and/or maintenance probably by processing lumenal matrix proteins. This is Serine protease filzig from Drosophila melanogaster (Fruit fly).